Here is a 334-residue protein sequence, read N- to C-terminus: Ketol-acid reductoisomerase (NADP(+)) (334 aa).

Positions 2-181 (TKVYYDQSVE…GATRAGVIET (180 aa)) constitute a KARI N-terminal Rossmann domain. Residues 25-28 (YGSQ), Arg48, Ser52, and 82-85 (DEIQ) contribute to the NADP(+) site. Residue His107 is part of the active site. NADP(+) is bound at residue Gly133. A KARI C-terminal knotted domain is found at 182 to 327 (TFKEETETDL…RELRKMMPFI (146 aa)). Residues Asp190, Glu194, Glu226, and Glu230 each contribute to the Mg(2+) site. Ser251 serves as a coordination point for substrate.

This sequence belongs to the ketol-acid reductoisomerase family. The cofactor is Mg(2+).

It carries out the reaction (2R)-2,3-dihydroxy-3-methylbutanoate + NADP(+) = (2S)-2-acetolactate + NADPH + H(+). The catalysed reaction is (2R,3R)-2,3-dihydroxy-3-methylpentanoate + NADP(+) = (S)-2-ethyl-2-hydroxy-3-oxobutanoate + NADPH + H(+). The protein operates within amino-acid biosynthesis; L-isoleucine biosynthesis; L-isoleucine from 2-oxobutanoate: step 2/4. Its pathway is amino-acid biosynthesis; L-valine biosynthesis; L-valine from pyruvate: step 2/4. Functionally, involved in the biosynthesis of branched-chain amino acids (BCAA). Catalyzes an alkyl-migration followed by a ketol-acid reduction of (S)-2-acetolactate (S2AL) to yield (R)-2,3-dihydroxy-isovalerate. In the isomerase reaction, S2AL is rearranged via a Mg-dependent methyl migration to produce 3-hydroxy-3-methyl-2-ketobutyrate (HMKB). In the reductase reaction, this 2-ketoacid undergoes a metal-dependent reduction by NADPH to yield (R)-2,3-dihydroxy-isovalerate. This is Ketol-acid reductoisomerase (NADP(+)) from Staphylococcus haemolyticus (strain JCSC1435).